The following is a 605-amino-acid chain: Beta-hexosaminidase ARB_07893 (605 aa).

A signal peptide spans 1-18; that stretch reads MLWIWVPGILGLFGRVEA. N-linked (GlcNAc...) asparagine glycosylation is present at Asn30. Glu293 acts as the Nucleophile in catalysis. N-linked (GlcNAc...) asparagine glycosylation is present at Asn342. Glu374 serves as the catalytic Proton donor. Asn449 is a glycosylation site (N-linked (GlcNAc...) asparagine).

It belongs to the glycosyl hydrolase 20 family.

Its subcellular location is the secreted. It catalyses the reaction Hydrolysis of terminal non-reducing N-acetyl-D-hexosamine residues in N-acetyl-beta-D-hexosaminides.. In terms of biological role, beta-hexosaminidase that shows a broad substrate specificity. The polypeptide is Beta-hexosaminidase ARB_07893 (Arthroderma benhamiae (strain ATCC MYA-4681 / CBS 112371) (Trichophyton mentagrophytes)).